The primary structure comprises 968 residues: Isoleucine--tRNA ligase (968 aa).

The 'HIGH' region motif lies at 68–78; the sequence is PYANGALHMGH. Residue Glu582 coordinates L-isoleucyl-5'-AMP. A 'KMSKS' region motif is present at residues 623-627; sequence KMSKS. Residue Lys626 coordinates ATP. Residues Cys936, Cys939, Cys956, and Cys959 each coordinate Zn(2+).

Belongs to the class-I aminoacyl-tRNA synthetase family. IleS type 1 subfamily. As to quaternary structure, monomer. Zn(2+) is required as a cofactor.

The protein localises to the cytoplasm. It carries out the reaction tRNA(Ile) + L-isoleucine + ATP = L-isoleucyl-tRNA(Ile) + AMP + diphosphate. Functionally, catalyzes the attachment of isoleucine to tRNA(Ile). As IleRS can inadvertently accommodate and process structurally similar amino acids such as valine, to avoid such errors it has two additional distinct tRNA(Ile)-dependent editing activities. One activity is designated as 'pretransfer' editing and involves the hydrolysis of activated Val-AMP. The other activity is designated 'posttransfer' editing and involves deacylation of mischarged Val-tRNA(Ile). The sequence is that of Isoleucine--tRNA ligase from Prochlorococcus marinus (strain MIT 9301).